The sequence spans 305 residues: Ribosomal RNA small subunit methyltransferase H (305 aa).

Residues 47–49, Asp66, Phe93, Asp108, and Gln115 each bind S-adenosyl-L-methionine; that span reads GGH. Residues 279–305 are disordered; that stretch reads ADSNEKLNNPRSRSAKLRLAKKRNPNE. A compositionally biased stretch (basic residues) spans 291-305; sequence RSAKLRLAKKRNPNE.

Belongs to the methyltransferase superfamily. RsmH family.

The protein resides in the cytoplasm. The catalysed reaction is cytidine(1402) in 16S rRNA + S-adenosyl-L-methionine = N(4)-methylcytidine(1402) in 16S rRNA + S-adenosyl-L-homocysteine + H(+). Specifically methylates the N4 position of cytidine in position 1402 (C1402) of 16S rRNA. The chain is Ribosomal RNA small subunit methyltransferase H from Prochlorococcus marinus (strain SARG / CCMP1375 / SS120).